The following is a 101-amino-acid chain: Small ribosomal subunit protein uS14 (101 aa).

The span at 1–10 (MAKKSAIEKN) shows a compositional bias: basic and acidic residues. Residues 1 to 23 (MAKKSAIEKNNRRKKMTKNAAPK) form a disordered region. Residues 11 to 23 (NRRKKMTKNAAPK) show a composition bias toward basic residues.

In terms of assembly, part of the 30S ribosomal subunit. Contacts proteins S3 and S10.

Its function is as follows. Binds 16S rRNA, required for the assembly of 30S particles and may also be responsible for determining the conformation of the 16S rRNA at the A site. This is Small ribosomal subunit protein uS14 from Rhodopseudomonas palustris (strain ATCC BAA-98 / CGA009).